Consider the following 102-residue polypeptide: RxLR effector protein PexRD41 (102 aa).

Positions 1–21 (MRSIFYFALAFAALTCSNASA) are cleaved as a signal peptide. Positions 39–53 (RSLRVAGQEAARGEE) match the RxLR-dEER motif.

The protein belongs to the RxLR effector family. In terms of assembly, interacts with host KRBP1.

The protein resides in the secreted. It is found in the host cytoplasm. The protein localises to the host nucleus. Its subcellular location is the host nucleolus. Its function is as follows. Effector that enhances P.infestans colonization of host plant leaves. During the early stages of P.infestans infection, interacts with and stabilizes host potato K-homology (KH) RNA-binding protein KRBP1, leading to its accumulation. This is RxLR effector protein PexRD41 from Phytophthora infestans (strain T30-4) (Potato late blight agent).